A 590-amino-acid polypeptide reads, in one-letter code: 2-hydroxyacyl-CoA lyase (590 aa).

Residues Gly-43, Gln-128, Gln-255, 273–274 (RS), and Arg-362 contribute to the 2-hydroxyisobutanoyl-CoA site. 410–412 (GDL) contacts thiamine diphosphate. Arg-417 serves as a coordination point for 2-hydroxyisobutanoyl-CoA. A thiamine diphosphate-binding site is contributed by Gly-433. Position 460 (Asp-460) interacts with Mg(2+). Residues 461 to 462 (GA) and 487 to 492 (NRAWNI) contribute to the thiamine diphosphate site. Asn-487 and Ala-489 together coordinate Mg(2+). The active-site Proton acceptor is the Glu-493. 561–564 (DSGK) provides a ligand contact to 2-hydroxyisobutanoyl-CoA. The C-terminal lid stretch occupies residues 566-590 (LGFVPDYQALTPWNDAEVARRQEGI).

The protein belongs to the TPP enzyme family. As to quaternary structure, a homotetramer formed by a dimer of dimers; active sites are located in the dimer interface. Mg(2+) serves as cofactor. Thiamine diphosphate is required as a cofactor.

The enzyme catalyses 2-hydroxyisobutanoyl-CoA = formyl-CoA + acetone. Its activity is regulated as follows. Activity is stimulated by thiamine diphosphate. Functionally, a lyase that reversibly degrades 2-hydroxyisobutyryl-CoA (2-HIB-CoA) to acetone and formyl-CoA. Probably also cleaves 2-hydroxy-2-methylbutyryl-CoA to butanone and formyl-CoA. Does not act on 2-hydroxy-2-ethylbutyryl-CoA. A C-terminal lid closes the active site upon substrate binding, and with residues Leu-127 and Ile-492 restricts the size of the active site cavity so it can only use short-chain (C4 and C5) acyl substrates. Part of a pathway that allows cells to grow on 2-methylpropane-1,2-diol or 2-hydroxyisobutyric acid (2-HIBA) as a sole carbon source. In Actinomycetospora chiangmaiensis (strain DSM 45062 / JCM 15998 / CCTCC AA 205017 / NBRC 104400 / YIM 0006), this protein is 2-hydroxyacyl-CoA lyase.